The sequence spans 715 residues: Fatty acid oxidation complex subunit alpha (715 aa).

Positions Met-1–Pro-190 are enoyl-CoA hydratase. Residues Gly-306–Gly-714 are 3-hydroxyacyl-CoA dehydrogenase.

It in the N-terminal section; belongs to the enoyl-CoA hydratase/isomerase family. In the central section; belongs to the 3-hydroxyacyl-CoA dehydrogenase family. Heterotetramer of two alpha chains (FadJ) and two beta chains (FadI).

Its subcellular location is the cytoplasm. It catalyses the reaction a (3S)-3-hydroxyacyl-CoA = a (2E)-enoyl-CoA + H2O. The catalysed reaction is a 4-saturated-(3S)-3-hydroxyacyl-CoA = a (3E)-enoyl-CoA + H2O. It carries out the reaction a (3S)-3-hydroxyacyl-CoA + NAD(+) = a 3-oxoacyl-CoA + NADH + H(+). The enzyme catalyses (3S)-3-hydroxybutanoyl-CoA = (3R)-3-hydroxybutanoyl-CoA. The protein operates within lipid metabolism; fatty acid beta-oxidation. In terms of biological role, catalyzes the formation of a hydroxyacyl-CoA by addition of water on enoyl-CoA. Also exhibits 3-hydroxyacyl-CoA epimerase and 3-hydroxyacyl-CoA dehydrogenase activities. This Salmonella typhimurium (strain LT2 / SGSC1412 / ATCC 700720) protein is Fatty acid oxidation complex subunit alpha.